Consider the following 361-residue polypeptide: Chorismate synthase (361 aa).

NADP(+) is bound by residues R48 and R54. FMN is bound by residues 125 to 127 (RSS), 238 to 239 (NA), G278, 293 to 297 (KPTSS), and R319.

The protein belongs to the chorismate synthase family. Homotetramer. The cofactor is FMNH2.

The catalysed reaction is 5-O-(1-carboxyvinyl)-3-phosphoshikimate = chorismate + phosphate. It functions in the pathway metabolic intermediate biosynthesis; chorismate biosynthesis; chorismate from D-erythrose 4-phosphate and phosphoenolpyruvate: step 7/7. Its function is as follows. Catalyzes the anti-1,4-elimination of the C-3 phosphate and the C-6 proR hydrogen from 5-enolpyruvylshikimate-3-phosphate (EPSP) to yield chorismate, which is the branch point compound that serves as the starting substrate for the three terminal pathways of aromatic amino acid biosynthesis. This reaction introduces a second double bond into the aromatic ring system. This is Chorismate synthase from Escherichia coli (strain K12 / MC4100 / BW2952).